The chain runs to 193 residues: Phosphoheptose isomerase (193 aa).

Residues 37 to 193 enclose the SIS domain; sequence LADSFKVGGK…QLIEKEMVKA (157 aa). 52–54 is a binding site for substrate; the sequence is NGG. Residues H61 and E65 each contribute to the Zn(2+) site. Substrate contacts are provided by residues E65, 93–94, 119–121, S124, and Q172; these read ND and STS. The Zn(2+) site is built by Q172 and H180.

This sequence belongs to the SIS family. GmhA subfamily. Homotetramer. Requires Zn(2+) as cofactor.

The protein localises to the cytoplasm. It carries out the reaction 2 D-sedoheptulose 7-phosphate = D-glycero-alpha-D-manno-heptose 7-phosphate + D-glycero-beta-D-manno-heptose 7-phosphate. The protein operates within carbohydrate biosynthesis; D-glycero-D-manno-heptose 7-phosphate biosynthesis; D-glycero-alpha-D-manno-heptose 7-phosphate and D-glycero-beta-D-manno-heptose 7-phosphate from sedoheptulose 7-phosphate: step 1/1. Its pathway is bacterial outer membrane biogenesis; LPS core biosynthesis. Its function is as follows. Catalyzes the isomerization of sedoheptulose 7-phosphate in D-glycero-D-manno-heptose 7-phosphate. This Photorhabdus laumondii subsp. laumondii (strain DSM 15139 / CIP 105565 / TT01) (Photorhabdus luminescens subsp. laumondii) protein is Phosphoheptose isomerase.